A 419-amino-acid polypeptide reads, in one-letter code: Divinyl chlorophyllide a 8-vinyl-reductase, chloroplastic (419 aa).

A chloroplast-targeting transit peptide spans 1 to 71 (MSICSTVGAG…PIVVSSTPVV (71 aa)).

It is found in the plastid. Its subcellular location is the chloroplast. The enzyme catalyses protochlorophyllide a + NADP(+) = 3,8-divinyl protochlorophyllide a + NADPH + H(+). It functions in the pathway porphyrin-containing compound metabolism; chlorophyll biosynthesis. Functionally, catalyzes the conversion of divinyl chlorophyllide to monovinyl chlorophyllide. Reduces the 8-vinyl group of the tetrapyrrole to an ethyl group using NADPH as the reductant. The best substrate is (3,8-divinyl)-chlorophyllide a (DV-Chlidea). Very low activity with (3,8-divinyl)-protochlorophyllide a (DV-Pchlidea) and (3,8-divinyl)-magnesium-protoporphyrin IX monomethyl ester (DV-MPE). No activity with (3,8-divinyl)-magnesium-protoporphyrin IX (DV-Mg-Proto) and (3,8-divinyl)-chlorophyll a (DV-Chla). This is Divinyl chlorophyllide a 8-vinyl-reductase, chloroplastic (DVR) from Cucumis sativus (Cucumber).